Reading from the N-terminus, the 180-residue chain is UPF0227 protein YcfP (180 aa).

The protein belongs to the UPF0227 family.

This is UPF0227 protein YcfP from Escherichia coli O139:H28 (strain E24377A / ETEC).